We begin with the raw amino-acid sequence, 80 residues long: Exodeoxyribonuclease 7 small subunit (80 aa).

This sequence belongs to the XseB family. As to quaternary structure, heterooligomer composed of large and small subunits.

It localises to the cytoplasm. The catalysed reaction is Exonucleolytic cleavage in either 5'- to 3'- or 3'- to 5'-direction to yield nucleoside 5'-phosphates.. In terms of biological role, bidirectionally degrades single-stranded DNA into large acid-insoluble oligonucleotides, which are then degraded further into small acid-soluble oligonucleotides. The chain is Exodeoxyribonuclease 7 small subunit from Erwinia tasmaniensis (strain DSM 17950 / CFBP 7177 / CIP 109463 / NCPPB 4357 / Et1/99).